Here is a 123-residue protein sequence, read N- to C-terminus: U11/U12 small nuclear ribonucleoprotein 25 kDa protein (123 aa).

The Ubiquitin-like domain occupies 32 to 123 (MTVRVCKMDG…VSFIKKLRQK (92 aa)).

Component of the U11/U12 snRNPs that are part of the U12-type spliceosome.

The protein localises to the nucleus. The chain is U11/U12 small nuclear ribonucleoprotein 25 kDa protein (SNRNP25) from Bos taurus (Bovine).